A 1230-amino-acid polypeptide reads, in one-letter code: Basic-leucine zipper transcription factor A (1230 aa).

4 disordered regions span residues 65–108 (LYLS…NIIN), 180–233 (LNGN…QQHQ), 270–310 (QQLK…PSTQ), and 422–578 (HQQN…RKKD). Low complexity-rich tracts occupy residues 69–108 (NSSN…NIIN), 192–233 (NNFS…QQHQ), 270–287 (QQLK…SPQP), 295–310 (PSLQ…PSTQ), and 422–447 (HQQN…QQQH). Polar residues-rich tracts occupy residues 448 to 458 (KSTPPTQNTPP) and 466 to 475 (TPTLTTNGKG). Residues 476 to 503 (SKSTPPTTTTTTTTTTSSSSSSSSSSSS) show a composition bias toward low complexity. Basic residues predominate over residues 523 to 537 (PHHHHHHHNNHHHHH). The span at 541–554 (FSDENDEEFIDENE) shows a compositional bias: acidic residues. Residues 555 to 618 (DKSKNKSRSS…LGDVMRPDFD (64 aa)) enclose the bZIP domain. The segment at 556–586 (KSKNKSRSSQNIASRNYRQRKKDHISEVEFK) is basic motif. Residues 562-571 (RSSQNIASRN) show a composition bias toward polar residues. The segment at 590-604 (LSLENERLKQENHLL) is leucine-zipper. The stretch at 728 to 753 (LKIDMELRTERDQLDREIKELFLKKI) forms a coiled coil. Disordered stretches follow at residues 772 to 869 (TFNS…EHNK) and 1025 to 1230 (NYTN…TPNI). Low complexity-rich tracts occupy residues 774-803 (NSES…IITP) and 810-831 (NNQN…SNNN). The segment covering 832–845 (SHHHHHHHHSHLHG) has biased composition (basic residues). A compositionally biased stretch (polar residues) spans 1025-1042 (NYTNSPLITSSPSQLTPN). 2 stretches are compositionally biased toward low complexity: residues 1052–1146 (NNNN…NNGN) and 1153–1193 (QALH…SPSS).

Belongs to the bZIP family. As to quaternary structure, binds DNA as a dimer. Heterodimerizes with dimB; in vitro. Also able to form homodimer; in vitro.

It localises to the nucleus. In terms of biological role, transcriptional regulator involved in DIF-1 signaling. DIF-1 (Differentiation Inducing Factor-1) is a signal molecule involved in the differentiation of pstO (prestalk-O) cells. Functions both as an activator of prestalk gene expression and a repressor of prespore gene expression. The sequence is that of Basic-leucine zipper transcription factor A (dimA) from Dictyostelium discoideum (Social amoeba).